Here is a 747-residue protein sequence, read N- to C-terminus: Tegument protein UL46 homolog (747 aa).

Disordered regions lie at residues 437–484 (FCCP…SPRT), 525–593 (QRSD…DYMR), 611–665 (TPYM…PEVV), and 689–747 (SASR…VSSL). A compositionally biased stretch (polar residues) spans 465–484 (LRSSRQLPTSPPSNIVSPRT). The segment covering 528–540 (DSSSSDNSTCSST) has biased composition (low complexity). Residues 541–553 (ETQYITLPSTPSP) show a composition bias toward polar residues. Basic and acidic residues-rich tracts occupy residues 707-724 (VCRE…DGFI) and 736-747 (KHPDQTERVSSL).

It belongs to the herpesviridae HHV-1 VP11/12 protein family.

Its subcellular location is the virion tegument. The protein resides in the host cell membrane. Functionally, modulates alpha trans-inducing factor-dependent activation of alpha genes. This is Tegument protein UL46 homolog from Equine herpesvirus 1 (strain Ab4p) (EHV-1).